The chain runs to 317 residues: Adenine deaminase (317 aa).

The Zn(2+) site is built by histidine 14, histidine 16, and histidine 194. The active-site Proton donor is glutamate 197. Position 275 (aspartate 275) interacts with Zn(2+). Aspartate 276 is a binding site for substrate.

The protein belongs to the metallo-dependent hydrolases superfamily. Adenosine and AMP deaminases family. Adenine deaminase type 2 subfamily. The cofactor is Zn(2+).

It carries out the reaction adenine + H2O + H(+) = hypoxanthine + NH4(+). Its function is as follows. Catalyzes the hydrolytic deamination of adenine to hypoxanthine. Plays an important role in the purine salvage pathway and in nitrogen catabolism. The sequence is that of Adenine deaminase from Pseudomonas fluorescens (strain Pf0-1).